Reading from the N-terminus, the 172-residue chain is Envelope protein UL45 (172 aa).

The Intravirion segment spans residues 1-27 (MPLRASEHAYRPLGPGTPPMRARLPAA). Residues 28-48 (AWVGVGTIIGGVVIIAALVLV) form a helical; Signal-anchor for type II membrane protein membrane-spanning segment. Over 49–172 (PSRASWALSP…TSTRNALGLP (124 aa)) the chain is Virion surface.

It belongs to the herpesviridae HHV-1 UL45 family.

Its subcellular location is the virion membrane. Functionally, important virulence factor of HSV neurotropism. Seems to be required for glycoprotein B-induced fusion. Dispensable for growth in vitro. This is Envelope protein UL45 from Human herpesvirus 1 (strain 17) (HHV-1).